The chain runs to 265 residues: 14-3-3-like protein GF14-D (265 aa).

Positions 244–265 are disordered; sequence DANDDGGDEIKEAAAPKEPGDQ. Over residues 251–265 the composition is skewed to basic and acidic residues; sequence DEIKEAAAPKEPGDQ.

This sequence belongs to the 14-3-3 family. In terms of assembly, interacts with BZR1. Interacts with ABI5.

Functionally, is associated with a DNA binding complex that binds to the G box, a well-characterized cis-acting DNA regulatory element found in plant genes. The sequence is that of 14-3-3-like protein GF14-D (GF14D) from Oryza sativa subsp. japonica (Rice).